Here is a 326-residue protein sequence, read N- to C-terminus: Neuferricin homolog (326 aa).

A signal peptide spans 1 to 34; sequence MEKNRRKKDDAGVMTKTLAGVAALTFLVSFICSS. In terms of domain architecture, Cytochrome b5 heme-binding spans 98 to 197; it reads KHVFTPEQLH…KEYPLVGVVA (100 aa).

Belongs to the cytochrome b5 family. MAPR subfamily.

It is found in the secreted. Its function is as follows. Heme-binding protein. This is Neuferricin homolog from Caenorhabditis briggsae.